Here is a 115-residue protein sequence, read N- to C-terminus: MIPEALRKQALIAYKHGLRATRVAFDGDNRVLLAARAEMRKGMENPDSSKTTQEQIQHLEEVATFLKRNLVQGQKIEGEEKYHLKIHKDIELGDNESIKQPTKFKARPFKKCSDN.

Residues 96 to 115 form a disordered region; the sequence is ESIKQPTKFKARPFKKCSDN. The segment covering 102–115 has biased composition (basic residues); the sequence is TKFKARPFKKCSDN.

This sequence belongs to the complex I LYR family. MZM1 subfamily. Interacts with RIP1.

The protein localises to the mitochondrion matrix. Its function is as follows. Assembly factor required for Rieske Fe-S protein RIP1 incorporation into the cytochrome b-c1 (CIII) complex. Functions as a chaperone, binding to this subunit within the mitochondrial matrix and stabilizing it prior to its translocation and insertion into the late CIII dimeric intermediate within the mitochondrial inner membrane. Modulates the mitochondrial matrix zinc pool. This chain is Mitochondrial zinc maintenance protein 1, mitochondrial (MZM1), found in Candida glabrata (strain ATCC 2001 / BCRC 20586 / JCM 3761 / NBRC 0622 / NRRL Y-65 / CBS 138) (Yeast).